A 207-amino-acid polypeptide reads, in one-letter code: uncharacterized protein (207 aa).

This is an uncharacterized protein from Bacillus subtilis (strain 168).